A 381-amino-acid polypeptide reads, in one-letter code: L-lactate dehydrogenase A-like 6B (381 aa).

NAD(+) contacts are provided by residues 101-106 and Arg148; that span reads DVDEGR. Residues Arg155, Asn187, and Arg218 each contribute to the substrate site. Asn187 serves as a coordination point for NAD(+). His242 functions as the Proton acceptor in the catalytic mechanism. Thr297 provides a ligand contact to substrate.

The protein belongs to the LDH/MDH superfamily. LDH family.

The catalysed reaction is (S)-lactate + NAD(+) = pyruvate + NADH + H(+). It functions in the pathway fermentation; pyruvate fermentation to lactate; (S)-lactate from pyruvate: step 1/1. In Bos taurus (Bovine), this protein is L-lactate dehydrogenase A-like 6B (LDHAL6B).